We begin with the raw amino-acid sequence, 459 residues long: Ribulose bisphosphate carboxylase large chain (459 aa).

The residue at position 4 (Lys4) is an N6,N6,N6-trimethyllysine. Substrate contacts are provided by Asn113 and Thr163. The active-site Proton acceptor is Lys165. Lys167 provides a ligand contact to substrate. Mg(2+) contacts are provided by Lys191, Asp193, and Glu194. Position 191 is an N6-carboxylysine (Lys191). His284 functions as the Proton acceptor in the catalytic mechanism. Arg285, His317, and Ser369 together coordinate substrate.

The protein belongs to the RuBisCO large chain family. Type I subfamily. In terms of assembly, heterohexadecamer of 8 large chains and 8 small chains; disulfide-linked. The disulfide link is formed within the large subunit homodimers. Requires Mg(2+) as cofactor. Post-translationally, the disulfide bond which can form in the large chain dimeric partners within the hexadecamer appears to be associated with oxidative stress and protein turnover.

It localises to the plastid. The protein resides in the chloroplast. It catalyses the reaction 2 (2R)-3-phosphoglycerate + 2 H(+) = D-ribulose 1,5-bisphosphate + CO2 + H2O. The enzyme catalyses D-ribulose 1,5-bisphosphate + O2 = 2-phosphoglycolate + (2R)-3-phosphoglycerate + 2 H(+). Functionally, ruBisCO catalyzes two reactions: the carboxylation of D-ribulose 1,5-bisphosphate, the primary event in carbon dioxide fixation, as well as the oxidative fragmentation of the pentose substrate in the photorespiration process. Both reactions occur simultaneously and in competition at the same active site. This Heuchera micrantha (Alum root) protein is Ribulose bisphosphate carboxylase large chain.